Consider the following 265-residue polypeptide: Aliphatic sulfonates import ATP-binding protein SsuB 1 (265 aa).

An ABC transporter domain is found at 31-255 (FAFKGVEKRF…RRGSAELARL (225 aa)). 63–70 (GKSGCGKS) lines the ATP pocket.

It belongs to the ABC transporter superfamily. Aliphatic sulfonates importer (TC 3.A.1.17.2) family. The complex is composed of two ATP-binding proteins (SsuB), two transmembrane proteins (SsuC) and a solute-binding protein (SsuA).

The protein localises to the cell inner membrane. It catalyses the reaction ATP + H2O + aliphatic sulfonate-[sulfonate-binding protein]Side 1 = ADP + phosphate + aliphatic sulfonateSide 2 + [sulfonate-binding protein]Side 1.. Functionally, part of the ABC transporter complex SsuABC involved in aliphatic sulfonates import. Responsible for energy coupling to the transport system. The polypeptide is Aliphatic sulfonates import ATP-binding protein SsuB 1 (Mesorhizobium japonicum (strain LMG 29417 / CECT 9101 / MAFF 303099) (Mesorhizobium loti (strain MAFF 303099))).